The primary structure comprises 848 residues: Alanine--tRNA ligase (848 aa).

Zn(2+)-binding residues include His553, His557, Cys654, and His658.

Belongs to the class-II aminoacyl-tRNA synthetase family. The cofactor is Zn(2+).

The protein resides in the cytoplasm. It catalyses the reaction tRNA(Ala) + L-alanine + ATP = L-alanyl-tRNA(Ala) + AMP + diphosphate. Its function is as follows. Catalyzes the attachment of alanine to tRNA(Ala) in a two-step reaction: alanine is first activated by ATP to form Ala-AMP and then transferred to the acceptor end of tRNA(Ala). Also edits incorrectly charged Ser-tRNA(Ala) and Gly-tRNA(Ala) via its editing domain. The polypeptide is Alanine--tRNA ligase (Neorickettsia sennetsu (strain ATCC VR-367 / Miyayama) (Ehrlichia sennetsu)).